The primary structure comprises 197 residues: NADH-quinone oxidoreductase subunit C (197 aa).

This sequence belongs to the complex I 30 kDa subunit family. In terms of assembly, NDH-1 is composed of 14 different subunits. Subunits NuoB, C, D, E, F, and G constitute the peripheral sector of the complex.

It is found in the cell inner membrane. The catalysed reaction is a quinone + NADH + 5 H(+)(in) = a quinol + NAD(+) + 4 H(+)(out). Its function is as follows. NDH-1 shuttles electrons from NADH, via FMN and iron-sulfur (Fe-S) centers, to quinones in the respiratory chain. The immediate electron acceptor for the enzyme in this species is believed to be ubiquinone. Couples the redox reaction to proton translocation (for every two electrons transferred, four hydrogen ions are translocated across the cytoplasmic membrane), and thus conserves the redox energy in a proton gradient. The chain is NADH-quinone oxidoreductase subunit C from Neisseria gonorrhoeae (strain ATCC 700825 / FA 1090).